The primary structure comprises 305 residues: tRNA pseudouridine synthase B (305 aa).

Catalysis depends on Asp39, which acts as the Nucleophile.

The protein belongs to the pseudouridine synthase TruB family. Type 1 subfamily.

The catalysed reaction is uridine(55) in tRNA = pseudouridine(55) in tRNA. Its function is as follows. Responsible for synthesis of pseudouridine from uracil-55 in the psi GC loop of transfer RNAs. The sequence is that of tRNA pseudouridine synthase B from Staphylococcus aureus (strain Mu50 / ATCC 700699).